We begin with the raw amino-acid sequence, 220 residues long: B-cell antigen receptor complex-associated protein alpha chain (220 aa).

Residues 1–28 (MPGGLEALRALPLLLFLSYACLGPGCQA) form the signal peptide. The region spanning 29 to 117 (LRVEGGPPSL…ILKRSCGTYL (89 aa)) is the Ig-like C2-type domain. Topologically, residues 29-137 (LRVEGGPPSL…LDMGEGTKNR (109 aa)) are extracellular. Cysteine 50 and cysteine 101 are joined by a disulfide. N-linked (GlcNAc...) asparagine glycosylation is found at asparagine 58 and asparagine 68. Residues 138 to 159 (IITAEGIILLFCAVVPGTLLLF) traverse the membrane as a helical segment. Topologically, residues 160–220 (RKRWQNEKFG…HIGDAQLEKP (61 aa)) are cytoplasmic. The region spanning 171-199 (DMPDDYEDENLYEGLNLDDCSMYEDISRG) is the ITAM domain. Residues tyrosine 182 and tyrosine 193 each carry the phosphotyrosine; by SRC-type Tyr-kinases modification. Arginine 198 is subject to Asymmetric dimethylarginine; by PRMT1. At tyrosine 204 the chain carries Phosphotyrosine; by Tyr-kinases.

In terms of assembly, heterodimer of alpha and beta chains; disulfide-linked. Part of the B-cell antigen receptor complex where the alpha/beta chain heterodimer is non-covalently associated with an antigen-specific membrane-bound surface immunoglobulin of two heavy chains and two light chains. Interacts through its phosphorylated ITAM domain with the SH2 domains of SYK which stimulates SYK autophosphorylation and activation. Also interacts, when phosphorylated on Tyr-204, with the SH2 domain of BLNK/SLP65, bringing BLNK into proximity with SYK and allowing SYK to phosphorylate BLNK which is necessary for trafficking of the BCR to late endosomes. Interacts with Src-family tyrosine kinases including FYN and LYN, increasing their activity. Post-translationally, phosphorylated on tyrosine, serine and threonine residues upon B-cell activation. Phosphorylation of tyrosine residues by Src-family kinases, including LYN, is an early and essential feature of the BCR signaling cascade. The phosphorylated tyrosines serve as docking sites for SH2-domain containing kinases, leading to their activation which in turn leads to phosphorylation of downstream targets. Phosphorylation of serine and threonine residues may prevent subsequent tyrosine phosphorylation. Arginine methylation in the ITAM domain may interfere with the binding of SYK. It promotes signals leading to B-cell differentiation. In terms of tissue distribution, B-cells.

It is found in the cell membrane. Its function is as follows. Required in cooperation with CD79B for initiation of the signal transduction cascade activated by binding of antigen to the B-cell antigen receptor complex (BCR) which leads to internalization of the complex, trafficking to late endosomes and antigen presentation. Also required for BCR surface expression and for efficient differentiation of pro- and pre-B-cells. Stimulates SYK autophosphorylation and activation. Binds to BLNK, bringing BLNK into proximity with SYK and allowing SYK to phosphorylate BLNK. Also interacts with and increases activity of some Src-family tyrosine kinases. Represses BCR signaling during development of immature B-cells. The chain is B-cell antigen receptor complex-associated protein alpha chain (Cd79a) from Mus musculus (Mouse).